Consider the following 317-residue polypeptide: uncharacterized protein (317 aa).

Helical transmembrane passes span 24–44, 63–83, 136–156, 187–207, 229–249, 252–272, and 295–315; these read ISII…TGIM, LSIS…SILA, LGVA…ISED, LIPI…IGFF, ILAL…GGFL, GILS…LTFS, and IVMV…AGLL.

The protein to M.jannaschii MJ0880, MJ1556 and MJ1589.

It localises to the cell membrane. This is an uncharacterized protein from Methanocaldococcus jannaschii (strain ATCC 43067 / DSM 2661 / JAL-1 / JCM 10045 / NBRC 100440) (Methanococcus jannaschii).